A 284-amino-acid polypeptide reads, in one-letter code: 1D-myo-inositol 2-acetamido-2-deoxy-alpha-D-glucopyranoside deacetylase (284 aa).

Residues histidine 12, aspartate 15, and histidine 146 each contribute to the Zn(2+) site.

It belongs to the MshB deacetylase family. It depends on Zn(2+) as a cofactor.

It carries out the reaction 1D-myo-inositol 2-acetamido-2-deoxy-alpha-D-glucopyranoside + H2O = 1D-myo-inositol 2-amino-2-deoxy-alpha-D-glucopyranoside + acetate. Catalyzes the deacetylation of 1D-myo-inositol 2-acetamido-2-deoxy-alpha-D-glucopyranoside (GlcNAc-Ins) in the mycothiol biosynthesis pathway. The chain is 1D-myo-inositol 2-acetamido-2-deoxy-alpha-D-glucopyranoside deacetylase from Mycolicibacterium vanbaalenii (strain DSM 7251 / JCM 13017 / BCRC 16820 / KCTC 9966 / NRRL B-24157 / PYR-1) (Mycobacterium vanbaalenii).